Reading from the N-terminus, the 270-residue chain is HTH-type transcriptional activator AllS (270 aa).

The region spanning 4–61 is the HTH lysR-type domain; the sequence is LDPETLRTFVSVAETGSFSRAAEKLYKTTATISYRIKLLEDNTGVALFSRTTRSVLLT. A DNA-binding region (H-T-H motif) is located at residues 21-40; that stretch reads FSRAAEKLYKTTATISYRIK.

The protein belongs to the LysR transcriptional regulatory family.

Functionally, positive regulator essential for the expression of allD operon. Binds to the allD promoter. This chain is HTH-type transcriptional activator AllS (allS), found in Klebsiella pneumoniae.